Reading from the N-terminus, the 797-residue chain is Adhesion G-protein coupled receptor G7 (797 aa).

The signal sequence occupies residues 1–26 (MASCRAWNLRVLVAVVCGLLTGIILG). The Extracellular segment spans residues 27-438 (LGIWRIVIRI…QYPKSLDILS (412 aa)). Residues Asn82, Asn159, Asn178, Asn191, Asn247, Asn261, Asn312, Asn316, and Asn387 are each glycosylated (N-linked (GlcNAc...) asparagine). The 154-residue stretch at 275-428 (FSVQKGASSS…AVLMTFKKDY (154 aa)) folds into the GAIN-B domain. 2 cysteine pairs are disulfide-bonded: Cys383/Cys410 and Cys398/Cys412. Residues 383–428 (CVYWNLSAKDWDTYGCQKDKGTDGFLRCRCNHTTNFAVLMTFKKDY) are GPS. A glycan (N-linked (GlcNAc...) asparagine) is linked at Asn413. The helical transmembrane segment at 439 to 459 (NVGCALSVTGLALTVIFQIVT) threads the bilayer. The Cytoplasmic portion of the chain corresponds to 460–468 (RKVRKTSVT). The helical transmembrane segment at 469 to 489 (WVLVNLCISMLIFNLLFVFGI) threads the bilayer. The Extracellular segment spans residues 490–528 (ENSNKNLQTSDGDINNIDFDNNDIPRTDTINIPNPMCTA). Residues 529–549 (IAALLHYFLLVTFTWNALSAA) traverse the membrane as a helical segment. Topologically, residues 550 to 565 (QLYYLLIRTMKPLPRH) are cytoplasmic. A helical transmembrane segment spans residues 566 to 586 (FILFISLIGWGVPAIVVAITV). The Extracellular portion of the chain corresponds to 587–623 (GVIYSQNGNNPQWELDYRQEKICWLAIPEPNGVIKSP). A helical membrane pass occupies residues 624-644 (LLWSFIVPVTIILISNVVMFI). Residues 645–669 (TISIKVLWKNNQNLTSTKKVSSMKK) lie on the Cytoplasmic side of the membrane. A helical membrane pass occupies residues 670 to 690 (IVSTLSVAVVFGITWILAYLM). At 691–698 (LVNDDSIR) the chain is on the extracellular side. Residues 699–719 (IVFSYIFCLFNTTQGLQIFIL) form a helical membrane-spanning segment. The Cytoplasmic segment spans residues 720 to 797 (YTVRTKVFQS…SESDNAKESI (78 aa)).

Belongs to the G-protein coupled receptor 2 family. Adhesion G-protein coupled receptor (ADGR) subfamily.

The protein localises to the membrane. Functionally, orphan receptor. The protein is Adhesion G-protein coupled receptor G7 (ADGRG7) of Homo sapiens (Human).